The chain runs to 186 residues: Protein SPMIP2 (186 aa).

The disordered stretch occupies residues 163–186 (SSLPRASKPPKLPKLPKKEKKRKH). Residues 176-186 (KLPKKEKKRKH) are compositionally biased toward basic residues.

This chain is Protein SPMIP2, found in Homo sapiens (Human).